The sequence spans 500 residues: 4-aminobutyrate aminotransferase, mitochondrial (500 aa).

Residues 1–28 (MAFLLITRRLACSSQKNLHLFIPGSRYI) constitute a mitochondrion transit peptide. Residue Cys-163 coordinates [2Fe-2S] cluster. A pyridoxal 5'-phosphate-binding site is contributed by 164–165 (GS). Cys-166 serves as a coordination point for [2Fe-2S] cluster. Arg-220 provides a ligand contact to substrate. Position 231 is an N6-succinyllysine (Lys-231). Lys-252 is subject to N6-acetyllysine; alternate. Residue Lys-252 is modified to N6-succinyllysine; alternate. Residues Lys-279 and Lys-318 each carry the N6-acetyllysine modification. Lys-357 is subject to N6-(pyridoxal phosphate)lysine. Thr-381 lines the pyridoxal 5'-phosphate pocket. At Lys-413 the chain carries N6-acetyllysine; alternate. The residue at position 413 (Lys-413) is an N6-succinyllysine; alternate. An N6-acetyllysine mark is found at Lys-452 and Lys-470.

The protein belongs to the class-III pyridoxal-phosphate-dependent aminotransferase family. In terms of assembly, homodimer; disulfide-linked. Requires pyridoxal 5'-phosphate as cofactor. [2Fe-2S] cluster serves as cofactor.

Its subcellular location is the mitochondrion matrix. The enzyme catalyses 4-aminobutanoate + 2-oxoglutarate = succinate semialdehyde + L-glutamate. It catalyses the reaction (S)-3-amino-2-methylpropanoate + 2-oxoglutarate = 2-methyl-3-oxopropanoate + L-glutamate. Catalyzes the conversion of gamma-aminobutyrate and L-beta-aminoisobutyrate to succinate semialdehyde and methylmalonate semialdehyde, respectively. Can also convert delta-aminovalerate and beta-alanine. This Mus musculus (Mouse) protein is 4-aminobutyrate aminotransferase, mitochondrial.